A 338-amino-acid chain; its full sequence is Glycerol-3-phosphate dehydrogenase [NAD(P)+] (338 aa).

3 residues coordinate NADPH: Ser13, Trp14, and Lys108. Positions 108, 139, and 141 each coordinate sn-glycerol 3-phosphate. NADPH is bound at residue Ala143. 5 residues coordinate sn-glycerol 3-phosphate: Lys194, Asp247, Ser257, Arg258, and Asn259. The active-site Proton acceptor is Lys194. Position 258 (Arg258) interacts with NADPH. Residues Val282 and Glu284 each contribute to the NADPH site.

Belongs to the NAD-dependent glycerol-3-phosphate dehydrogenase family.

The protein localises to the cytoplasm. The catalysed reaction is sn-glycerol 3-phosphate + NAD(+) = dihydroxyacetone phosphate + NADH + H(+). The enzyme catalyses sn-glycerol 3-phosphate + NADP(+) = dihydroxyacetone phosphate + NADPH + H(+). The protein operates within membrane lipid metabolism; glycerophospholipid metabolism. Its function is as follows. Catalyzes the reduction of the glycolytic intermediate dihydroxyacetone phosphate (DHAP) to sn-glycerol 3-phosphate (G3P), the key precursor for phospholipid synthesis. The sequence is that of Glycerol-3-phosphate dehydrogenase [NAD(P)+] from Streptococcus pneumoniae (strain CGSP14).